The sequence spans 289 residues: Phosphatidylglycerol--prolipoprotein diacylglyceryl transferase (289 aa).

The next 4 membrane-spanning stretches (helical) occupy residues 18–38, 54–74, 86–106, and 116–136; these read FTIY…YVMA, DFVM…YVIF, VFYI…GVLT, and LSFW…QAIG. Arg-137 provides a ligand contact to a 1,2-diacyl-sn-glycero-3-phospho-(1'-sn-glycerol). Helical transmembrane passes span 177–197, 205–225, and 236–256; these read HPTF…LLLL, GELF…IEGM, and LRTA…LWWY.

This sequence belongs to the Lgt family.

Its subcellular location is the cell membrane. It catalyses the reaction L-cysteinyl-[prolipoprotein] + a 1,2-diacyl-sn-glycero-3-phospho-(1'-sn-glycerol) = an S-1,2-diacyl-sn-glyceryl-L-cysteinyl-[prolipoprotein] + sn-glycerol 1-phosphate + H(+). The protein operates within protein modification; lipoprotein biosynthesis (diacylglyceryl transfer). Functionally, catalyzes the transfer of the diacylglyceryl group from phosphatidylglycerol to the sulfhydryl group of the N-terminal cysteine of a prolipoprotein, the first step in the formation of mature lipoproteins. In Halalkalibacterium halodurans (strain ATCC BAA-125 / DSM 18197 / FERM 7344 / JCM 9153 / C-125) (Bacillus halodurans), this protein is Phosphatidylglycerol--prolipoprotein diacylglyceryl transferase.